A 383-amino-acid polypeptide reads, in one-letter code: S-adenosylmethionine synthase 1 (383 aa).

His15 contacts ATP. Asp17 serves as a coordination point for Mg(2+). Residue Glu43 coordinates K(+). Residues Glu56 and Gln99 each contribute to the L-methionine site. The flexible loop stretch occupies residues 99–109; sequence QSPDINLGVSR. ATP is bound by residues 162–164, 228–229, Asp237, 243–244, Ala260, and Lys264; these read DGK, RF, and RK. An L-methionine-binding site is contributed by Asp237. Lys268 lines the L-methionine pocket.

It belongs to the AdoMet synthase family. In terms of assembly, homotetramer; dimer of dimers. It depends on Mg(2+) as a cofactor. Requires K(+) as cofactor.

It is found in the cytoplasm. The enzyme catalyses L-methionine + ATP + H2O = S-adenosyl-L-methionine + phosphate + diphosphate. It participates in amino-acid biosynthesis; S-adenosyl-L-methionine biosynthesis; S-adenosyl-L-methionine from L-methionine: step 1/1. Catalyzes the formation of S-adenosylmethionine (AdoMet) from methionine and ATP. The overall synthetic reaction is composed of two sequential steps, AdoMet formation and the subsequent tripolyphosphate hydrolysis which occurs prior to release of AdoMet from the enzyme. This Rhodopseudomonas palustris (strain BisB18) protein is S-adenosylmethionine synthase 1.